A 309-amino-acid polypeptide reads, in one-letter code: Small ribosomal subunit biogenesis GTPase RsgA (309 aa).

A CP-type G domain is found at 64-225 (ENELVRPPLA…VADTPGFSTY (162 aa)). GTP-binding positions include 113–116 (SKTD) and 168–176 (GQTGAGKST). Residues cysteine 249, cysteine 254, histidine 256, and cysteine 262 each coordinate Zn(2+).

The protein belongs to the TRAFAC class YlqF/YawG GTPase family. RsgA subfamily. In terms of assembly, monomer. Associates with 30S ribosomal subunit, binds 16S rRNA. Zn(2+) is required as a cofactor.

The protein resides in the cytoplasm. One of several proteins that assist in the late maturation steps of the functional core of the 30S ribosomal subunit. Helps release RbfA from mature subunits. May play a role in the assembly of ribosomal proteins into the subunit. Circularly permuted GTPase that catalyzes slow GTP hydrolysis, GTPase activity is stimulated by the 30S ribosomal subunit. The chain is Small ribosomal subunit biogenesis GTPase RsgA from Pediococcus pentosaceus (strain ATCC 25745 / CCUG 21536 / LMG 10740 / 183-1w).